The sequence spans 106 residues: Putative membrane protein insertion efficiency factor (106 aa).

It belongs to the UPF0161 family.

Its subcellular location is the cell inner membrane. Could be involved in insertion of integral membrane proteins into the membrane. The chain is Putative membrane protein insertion efficiency factor from Acinetobacter baumannii (strain SDF).